A 142-amino-acid polypeptide reads, in one-letter code: Large ribosomal subunit protein uL13 (142 aa).

This sequence belongs to the universal ribosomal protein uL13 family. As to quaternary structure, part of the 50S ribosomal subunit.

Functionally, this protein is one of the early assembly proteins of the 50S ribosomal subunit, although it is not seen to bind rRNA by itself. It is important during the early stages of 50S assembly. The protein is Large ribosomal subunit protein uL13 of Idiomarina loihiensis (strain ATCC BAA-735 / DSM 15497 / L2-TR).